The following is a 228-amino-acid chain: Urease accessory protein UreF (228 aa).

Belongs to the UreF family. As to quaternary structure, ureD, UreF and UreG form a complex that acts as a GTP-hydrolysis-dependent molecular chaperone, activating the urease apoprotein by helping to assemble the nickel containing metallocenter of UreC. The UreE protein probably delivers the nickel.

The protein localises to the cytoplasm. Its function is as follows. Required for maturation of urease via the functional incorporation of the urease nickel metallocenter. This is Urease accessory protein UreF from Alkalilimnicola ehrlichii (strain ATCC BAA-1101 / DSM 17681 / MLHE-1).